Reading from the N-terminus, the 329-residue chain is Probable endo-beta-1,4-glucanase B (329 aa).

A signal peptide spans 1 to 18 (MKFGSIVLIAAAAGSAVA). N33 and N96 each carry an N-linked (GlcNAc...) asparagine glycan. E156 acts as the Proton donor in catalysis. Catalysis depends on E263, which acts as the Nucleophile.

It belongs to the glycosyl hydrolase 5 (cellulase A) family.

It is found in the secreted. It carries out the reaction Endohydrolysis of (1-&gt;4)-beta-D-glucosidic linkages in cellulose, lichenin and cereal beta-D-glucans.. Its function is as follows. Has endoglucanase activity on substrates containing beta-1,4 glycosidic bonds, like in carboxymethylcellulose (CMC), hydroxyethylcellulose (HEC) and beta-glucan. Involved in the degradation of complex natural cellulosic substrates. In Neosartorya fischeri (strain ATCC 1020 / DSM 3700 / CBS 544.65 / FGSC A1164 / JCM 1740 / NRRL 181 / WB 181) (Aspergillus fischerianus), this protein is Probable endo-beta-1,4-glucanase B (eglB).